The sequence spans 225 residues: NAD(P)H-quinone oxidoreductase subunit K, chloroplastic (225 aa).

The [4Fe-4S] cluster site is built by Cys43, Cys44, Cys108, and Cys139.

It belongs to the complex I 20 kDa subunit family. In terms of assembly, NDH is composed of at least 16 different subunits, 5 of which are encoded in the nucleus. The cofactor is [4Fe-4S] cluster.

Its subcellular location is the plastid. It is found in the chloroplast thylakoid membrane. It catalyses the reaction a plastoquinone + NADH + (n+1) H(+)(in) = a plastoquinol + NAD(+) + n H(+)(out). The enzyme catalyses a plastoquinone + NADPH + (n+1) H(+)(in) = a plastoquinol + NADP(+) + n H(+)(out). Functionally, NDH shuttles electrons from NAD(P)H:plastoquinone, via FMN and iron-sulfur (Fe-S) centers, to quinones in the photosynthetic chain and possibly in a chloroplast respiratory chain. The immediate electron acceptor for the enzyme in this species is believed to be plastoquinone. Couples the redox reaction to proton translocation, and thus conserves the redox energy in a proton gradient. This is NAD(P)H-quinone oxidoreductase subunit K, chloroplastic from Populus trichocarpa (Western balsam poplar).